Consider the following 435-residue polypeptide: BAHD acyltransferase BIA1 (435 aa).

Catalysis depends on proton acceptor residues His151 and Asp369.

The protein belongs to the plant acyltransferase family. As to expression, mostly expressed in roots (particularly in the root elongation zone), and, to a lower extent, in seedling, leaves (especially in hydathodes), siliques (e.g. in developing seeds) and flowers.

Its subcellular location is the cytoplasm. Its function is as follows. Monitors brassinosteroids (BR) responses and homeostasis, particularly in the root and hypocotyl in darkness. Promotes flavonoid biosynthesis. This Arabidopsis thaliana (Mouse-ear cress) protein is BAHD acyltransferase BIA1.